The following is a 60-amino-acid chain: UPF0434 protein KPN78578_09190 (60 aa).

This sequence belongs to the UPF0434 family.

The polypeptide is UPF0434 protein KPN78578_09190 (Klebsiella pneumoniae subsp. pneumoniae (strain ATCC 700721 / MGH 78578)).